The following is a 161-amino-acid chain: UPF0262 protein mll6455 (161 aa).

This sequence belongs to the UPF0262 family.

The polypeptide is UPF0262 protein mll6455 (Mesorhizobium japonicum (strain LMG 29417 / CECT 9101 / MAFF 303099) (Mesorhizobium loti (strain MAFF 303099))).